Consider the following 505-residue polypeptide: Annexin A11 (505 aa).

Pro residues-rich tracts occupy residues 1-17 (MSYP…PPAA) and 99-160 (PVPP…PVPL). Disordered regions lie at residues 1–38 (MSYP…PPIG) and 84–199 (PVPP…DAPG). Residues 161–177 (PGQQQPVPSYPGYPGSG) are compositionally biased toward low complexity. Annexin repeat units lie at residues 200 to 271 (FDPL…ALMK), 272 to 343 (TPVL…SLSQ), 355 to 427 (SLAQ…AVVK), and 431 to 502 (NTPA…KICG). K248 and K255 each carry N6-acetyllysine. K479 is subject to N6-acetyllysine.

Belongs to the annexin family. Interacts with S100A6. Interacts with PDCD6 in a calcium-dependent manner. Interacts with KIF23 during cytokinesis.

It localises to the cytoplasm. The protein resides in the melanosome. The protein localises to the nucleus envelope. It is found in the nucleus. Its subcellular location is the nucleoplasm. It localises to the cytoskeleton. The protein resides in the spindle. Binds specifically to calcyclin in a calcium-dependent manner. Required for midbody formation and completion of the terminal phase of cytokinesis. The polypeptide is Annexin A11 (ANXA11) (Homo sapiens (Human)).